Here is a 361-residue protein sequence, read N- to C-terminus: Chorismate synthase (361 aa).

Residues R48 and R54 each contribute to the NADP(+) site. Residues 125 to 127 (RSS), 238 to 239 (NA), G278, 293 to 297 (KPTSS), and R319 each bind FMN.

This sequence belongs to the chorismate synthase family. As to quaternary structure, homotetramer. It depends on FMNH2 as a cofactor.

It catalyses the reaction 5-O-(1-carboxyvinyl)-3-phosphoshikimate = chorismate + phosphate. Its pathway is metabolic intermediate biosynthesis; chorismate biosynthesis; chorismate from D-erythrose 4-phosphate and phosphoenolpyruvate: step 7/7. Catalyzes the anti-1,4-elimination of the C-3 phosphate and the C-6 proR hydrogen from 5-enolpyruvylshikimate-3-phosphate (EPSP) to yield chorismate, which is the branch point compound that serves as the starting substrate for the three terminal pathways of aromatic amino acid biosynthesis. This reaction introduces a second double bond into the aromatic ring system. The chain is Chorismate synthase from Vibrio parahaemolyticus serotype O3:K6 (strain RIMD 2210633).